Reading from the N-terminus, the 614-residue chain is Laccase 1 (614 aa).

Residues 1 to 21 form the signal peptide; the sequence is MSRFARLLLMVVALFFTNAWA. Plastocyanin-like domains are found at residues 30–143 and 172–360; these read ITWK…IRPK and YLVV…MRIP. N-linked (GlcNAc...) asparagine glycosylation occurs at Asn-75. Cu cation contacts are provided by His-79, His-81, His-123, and His-125. N-linked (GlcNAc...) asparagine glycosylation is found at Asn-257, Asn-280, Asn-445, Asn-469, and Asn-485. In terms of domain architecture, Plastocyanin-like 3 spans 469–599; that stretch reads NATRDTENDG…GGMGIAILDG (131 aa). 3 residues coordinate Cu cation: His-507, His-510, and His-512. Residue Asn-527 is glycosylated (N-linked (GlcNAc...) asparagine). Residues His-581, Cys-582, His-583, and His-587 each coordinate Cu cation.

The protein belongs to the multicopper oxidase family. Cu cation serves as cofactor.

The protein localises to the cell surface. The protein operates within pigment biosynthesis. In terms of biological role, laccase; part of the Pks1 gene cluster that mediates the biosynthesis of an anthraquinone derivative pigment that contributes to conidial pigmentation that provides protection from UV radiation, heat and cold stress. The polyketide synthase Pks1 produces 1-acetyl-2,4,6,8-tetrahydroxy-9,10-anthraquinone though condensation of acetyl-CoA with malonyl-CoA. The dehydratase EthD and the laccase Mlac1 further convert the anthraquinone derivative into the final conidial pigment. This is Laccase 1 from Metarhizium majus (strain ARSEF 297).